The following is a 207-amino-acid chain: LexA repressor (207 aa).

Residues 28–48 (VREIGEAVGLASSSTVHGHLS) constitute a DNA-binding region (H-T-H motif). Active-site for autocatalytic cleavage activity residues include Ser130 and Lys168.

It belongs to the peptidase S24 family. As to quaternary structure, homodimer.

It carries out the reaction Hydrolysis of Ala-|-Gly bond in repressor LexA.. Functionally, represses a number of genes involved in the response to DNA damage (SOS response), including recA and lexA. In the presence of single-stranded DNA, RecA interacts with LexA causing an autocatalytic cleavage which disrupts the DNA-binding part of LexA, leading to derepression of the SOS regulon and eventually DNA repair. This is LexA repressor from Staphylococcus aureus (strain Mu3 / ATCC 700698).